We begin with the raw amino-acid sequence, 292 residues long: Manganese transport system membrane protein MntC (292 aa).

Transmembrane regions (helical) follow at residues 20–40 (ALTA…FIIL), 58–78 (VVIA…TGVI), 96–116 (SAIG…ITGM), 137–157 (TDLW…ILFY), 168–188 (VMAQ…MLLL), 190–210 (LVTV…MLIT), 226–246 (LCLA…FSVI), and 249–269 (VASG…AFFF).

Belongs to the ABC-3 integral membrane protein family.

The protein localises to the cell membrane. This protein is probably a component of a manganese permease, a binding protein-dependent, ATP-driven transport system. This chain is Manganese transport system membrane protein MntC (mntC), found in Halalkalibacterium halodurans (strain ATCC BAA-125 / DSM 18197 / FERM 7344 / JCM 9153 / C-125) (Bacillus halodurans).